Consider the following 534-residue polypeptide: Probable protein kinase UbiB (534 aa).

Residues aspartate 23 to tryptophan 43 traverse the membrane as a helical segment. Residues arginine 125–leucine 492 form the Protein kinase domain. Residues leucine 131–valine 139 and lysine 153 each bind ATP. The active-site Proton acceptor is aspartate 288. Transmembrane regions (helical) follow at residues tryptophan 490 to glycine 510 and leucine 512 to valine 532.

This sequence belongs to the ABC1 family. UbiB subfamily.

The protein localises to the cell inner membrane. It functions in the pathway cofactor biosynthesis; ubiquinone biosynthesis [regulation]. Is probably a protein kinase regulator of UbiI activity which is involved in aerobic coenzyme Q (ubiquinone) biosynthesis. In Pseudomonas fluorescens (strain SBW25), this protein is Probable protein kinase UbiB.